The chain runs to 271 residues: Type III pantothenate kinase (271 aa).

6-13 (DVRNTHTV) is an ATP binding site. 109–112 (GADR) lines the substrate pocket. Catalysis depends on D111, which acts as the Proton acceptor. Residue D131 participates in K(+) binding. S134 is a binding site for ATP. T186 is a binding site for substrate.

This sequence belongs to the type III pantothenate kinase family. In terms of assembly, homodimer. Requires NH4(+) as cofactor. K(+) serves as cofactor.

The protein resides in the cytoplasm. The enzyme catalyses (R)-pantothenate + ATP = (R)-4'-phosphopantothenate + ADP + H(+). It participates in cofactor biosynthesis; coenzyme A biosynthesis; CoA from (R)-pantothenate: step 1/5. In terms of biological role, catalyzes the phosphorylation of pantothenate (Pan), the first step in CoA biosynthesis. This chain is Type III pantothenate kinase, found in Mycobacteroides abscessus (strain ATCC 19977 / DSM 44196 / CCUG 20993 / CIP 104536 / JCM 13569 / NCTC 13031 / TMC 1543 / L948) (Mycobacterium abscessus).